Here is a 217-residue protein sequence, read N- to C-terminus: Vesicle-associated membrane protein 723 (217 aa).

Residues Met-1–Leu-192 lie on the Cytoplasmic side of the membrane. The region spanning Phe-10 to Leu-114 is the Longin domain. The 57-residue stretch at Asn-130–Gln-186 folds into the v-SNARE coiled-coil homology domain. Residues Ile-193–Phe-213 traverse the membrane as a helical; Anchor for type IV membrane protein segment. The Vesicular portion of the chain corresponds to Asn-214–Lys-217.

It belongs to the synaptobrevin family. In terms of tissue distribution, highly expressed in stems and roots. Detected in flowers and leaves.

The protein localises to the endoplasmic reticulum membrane. Its function is as follows. Involved in the targeting and/or fusion of transport vesicles to their target membrane. The chain is Vesicle-associated membrane protein 723 from Arabidopsis thaliana (Mouse-ear cress).